A 77-amino-acid polypeptide reads, in one-letter code: MARFQRTKEREEDRCSLNIYYVRNTTQGTAPACVGKRMQPSPTGKGGKCCTVHGLTRKIHNVQPNLQSPILSAACVD.

This is an uncharacterized protein from Homo sapiens (Human).